A 29-amino-acid polypeptide reads, in one-letter code: Kappa-theraphotoxin-Ps1a (29 aa).

3 disulfides stabilise this stretch: Cys-2/Cys-16, Cys-9/Cys-21, and Cys-15/Cys-25. An Isoleucine amide modification is found at Ile-29.

The protein belongs to the neurotoxin 30 (phrixotoxin) family. Expressed by the venom gland.

It localises to the secreted. Potent and specific blocker of Kv4.2/KCND2 (IC(50)=5 nM) and Kv4.3/KCND3 (IC(50)=28 nM) potassium channels. Acts by altering the gating properties of these channels. Also shows moderate inhibition on human voltage-gated sodium channel Nav1.7/SCN9A activation (IC(50)=423 nM). The polypeptide is Kappa-theraphotoxin-Ps1a (Paraphysa scrofa (Chilean copper tarantula)).